Here is a 132-residue protein sequence, read N- to C-terminus: Small ribosomal subunit protein uS8 (132 aa).

Belongs to the universal ribosomal protein uS8 family. As to quaternary structure, part of the 30S ribosomal subunit. Contacts proteins S5 and S12.

In terms of biological role, one of the primary rRNA binding proteins, it binds directly to 16S rRNA central domain where it helps coordinate assembly of the platform of the 30S subunit. This chain is Small ribosomal subunit protein uS8, found in Streptococcus pyogenes serotype M1.